Consider the following 168-residue polypeptide: 2-C-methyl-D-erythritol 2,4-cyclodiphosphate synthase (168 aa).

2 residues coordinate a divalent metal cation: Asp11 and His13. 4-CDP-2-C-methyl-D-erythritol 2-phosphate is bound by residues 11–13 and 41–42; these read DVH and HS. His49 lines the a divalent metal cation pocket. Residues 63 to 65, 68 to 72, 139 to 142, Phe146, and Arg149 contribute to the 4-CDP-2-C-methyl-D-erythritol 2-phosphate site; these read DIG, FPDTD, and TTTE.

Belongs to the IspF family. In terms of assembly, homotrimer. It depends on a divalent metal cation as a cofactor.

The enzyme catalyses 4-CDP-2-C-methyl-D-erythritol 2-phosphate = 2-C-methyl-D-erythritol 2,4-cyclic diphosphate + CMP. It functions in the pathway isoprenoid biosynthesis; isopentenyl diphosphate biosynthesis via DXP pathway; isopentenyl diphosphate from 1-deoxy-D-xylulose 5-phosphate: step 4/6. Its function is as follows. Involved in the biosynthesis of isopentenyl diphosphate (IPP) and dimethylallyl diphosphate (DMAPP), two major building blocks of isoprenoid compounds. Catalyzes the conversion of 4-diphosphocytidyl-2-C-methyl-D-erythritol 2-phosphate (CDP-ME2P) to 2-C-methyl-D-erythritol 2,4-cyclodiphosphate (ME-CPP) with a corresponding release of cytidine 5-monophosphate (CMP). The polypeptide is 2-C-methyl-D-erythritol 2,4-cyclodiphosphate synthase (Psychrobacter cryohalolentis (strain ATCC BAA-1226 / DSM 17306 / VKM B-2378 / K5)).